The primary structure comprises 522 residues: Subtilisin-like protease 10 (522 aa).

The signal sequence occupies residues 1-19 (MFFFKGVVAVLSFFSAVNA). A propeptide spanning residues 20–117 (APFMKPNNGT…VERDQIGTSQ (98 aa)) is cleaved from the precursor. The region spanning 36-113 (SYIVLLKRDI…HVAHVERDQI (78 aa)) is the Inhibitor I9 domain. Residues 127-405 (NWGLGRLSNN…KLLVNGANGT (279 aa)) form the Peptidase S8 domain. Active-site charge relay system residues include aspartate 159 and histidine 190. Asparagine 251 carries N-linked (GlcNAc...) asparagine glycosylation. The Charge relay system role is filled by serine 348. Over residues 384 to 397 (ASVKNPGPNTTNKL) the composition is skewed to polar residues. The tract at residues 384–515 (ASVKNPGPNT…GWNRPMWWNR (132 aa)) is disordered. 2 N-linked (GlcNAc...) asparagine glycosylation sites follow: asparagine 392 and asparagine 403. A compositionally biased stretch (pro residues) spans 432–459 (SQNPPPGQNPPPGQNPPPEQPAPSPPAN).

Belongs to the peptidase S8 family.

It localises to the secreted. Functionally, secreted subtilisin-like serine protease with keratinolytic activity that contributes to pathogenicity. The polypeptide is Subtilisin-like protease 10 (SUB10) (Arthroderma benhamiae (strain ATCC MYA-4681 / CBS 112371) (Trichophyton mentagrophytes)).